A 107-amino-acid polypeptide reads, in one-letter code: Transcription initiation factor IIA subunit 2-2 (107 aa).

Belongs to the TFIIA subunit 2 family. TFIIA is a heterodimer of the large unprocessed subunit 1 and a small subunit gamma. It was originally believed to be a heterotrimer of an alpha (p30), a beta (p20) and a gamma (p14) subunit.

The protein resides in the nucleus. TFIIA is a component of the transcription machinery of RNA polymerase II and plays an important role in transcriptional activation. TFIIA in a complex with TBP mediates transcriptional activity. The protein is Transcription initiation factor IIA subunit 2-2 (TfIIA-S-2) of Drosophila melanogaster (Fruit fly).